The primary structure comprises 638 residues: Plasma kallikrein (638 aa).

The signal sequence occupies residues 1-19 (MILFKQVGYFVSLFATVSC). 4 consecutive Apple domains span residues 21–104 (CLSQ…LKQC), 111–194 (CHQD…LKSC), 201–284 (CPMD…LFTC), and 292–375 (CHFK…LRLC). Intrachain disulfides connect Cys-21–Cys-104, Cys-47–Cys-77, Cys-51–Cys-57, Cys-111–Cys-194, Cys-137–Cys-166, Cys-141–Cys-147, Cys-201–Cys-284, Cys-227–Cys-256, Cys-231–Cys-237, Cys-292–Cys-375, Cys-318–Cys-347, Cys-322–Cys-328, Cys-340–Cys-345, Cys-383–Cys-503, Cys-419–Cys-435, Cys-517–Cys-584, Cys-548–Cys-563, and Cys-574–Cys-602. Asn-127 carries N-linked (GlcNAc...) asparagine glycosylation. Residue Asn-215 is glycosylated (N-linked (GlcNAc...) asparagine). N-linked (GlcNAc...) asparagine glycosylation occurs at Asn-308. The Peptidase S1 domain maps to 391–626 (IVGGTNSSLG…YIDWILEKIQ (236 aa)). A glycan (N-linked (GlcNAc...) asparagine) is linked at Asn-396. His-434 acts as the Charge relay system in catalysis. Residue Asn-453 is glycosylated (N-linked (GlcNAc...) asparagine). Asp-483 functions as the Charge relay system in the catalytic mechanism. N-linked (GlcNAc...) asparagine glycosylation is present at Asn-494. Ser-578 acts as the Charge relay system in catalysis.

The protein belongs to the peptidase S1 family. Plasma kallikrein subfamily. As to quaternary structure, forms a heterodimer with SERPINA5. The zymogen is activated by factor XIIa, which cleaves the molecule into a light chain, which contains the active site, and a heavy chain, which associates with HMW kininogen. These chains are linked by one or more disulfide bonds.

Its subcellular location is the secreted. It carries out the reaction Cleaves selectively Arg-|-Xaa and Lys-|-Xaa bonds, including Lys-|-Arg and Arg-|-Ser bonds in (human) kininogen to release bradykinin.. With respect to regulation, inhibited by SERPINA5. In terms of biological role, the enzyme cleaves Lys-Arg and Arg-Ser bonds. It activates, in a reciprocal reaction, factor XII after its binding to a negatively charged surface. It also releases bradykinin from HMW kininogen and may also play a role in the renin-angiotensin system by converting prorenin into renin. The protein is Plasma kallikrein (Klkb1) of Rattus norvegicus (Rat).